The primary structure comprises 123 residues: MSATQASSQQADSKAPADIIGQLQRAASAEEFFQLLDVAYDPNVVNVARLHILKRMGQYLAGEDLAGLPAAEATARCKAVLERAYADFVASTPLDQRVFKVLKDAVAPKSPRAPAFVSLDALK.

The protein belongs to the NifW family. Homotrimer; associates with NifD.

Functionally, may protect the nitrogenase Fe-Mo protein from oxidative damage. The sequence is that of Nitrogenase-stabilizing/protective protein NifW from Rhodopseudomonas palustris (strain HaA2).